We begin with the raw amino-acid sequence, 719 residues long: Phosphoribosylformylglycinamidine synthase subunit PurL (719 aa).

His47 is an active-site residue. ATP contacts are provided by Tyr50 and Lys89. Glu91 provides a ligand contact to Mg(2+). Substrate-binding positions include 92 to 95 (SHNH) and Arg114. The active-site Proton acceptor is His93. Asp115 contributes to the Mg(2+) binding site. Position 238 (Gln238) interacts with substrate. Asp266 provides a ligand contact to Mg(2+). 310-312 (ESQ) is a substrate binding site. Asp488 and Gly525 together coordinate ATP. Asn526 is a binding site for Mg(2+). Residue Ser528 participates in substrate binding.

Belongs to the FGAMS family. In terms of assembly, monomer. Part of the FGAM synthase complex composed of 1 PurL, 1 PurQ and 2 PurS subunits.

The protein resides in the cytoplasm. The catalysed reaction is N(2)-formyl-N(1)-(5-phospho-beta-D-ribosyl)glycinamide + L-glutamine + ATP + H2O = 2-formamido-N(1)-(5-O-phospho-beta-D-ribosyl)acetamidine + L-glutamate + ADP + phosphate + H(+). Its pathway is purine metabolism; IMP biosynthesis via de novo pathway; 5-amino-1-(5-phospho-D-ribosyl)imidazole from N(2)-formyl-N(1)-(5-phospho-D-ribosyl)glycinamide: step 1/2. In terms of biological role, part of the phosphoribosylformylglycinamidine synthase complex involved in the purines biosynthetic pathway. Catalyzes the ATP-dependent conversion of formylglycinamide ribonucleotide (FGAR) and glutamine to yield formylglycinamidine ribonucleotide (FGAM) and glutamate. The FGAM synthase complex is composed of three subunits. PurQ produces an ammonia molecule by converting glutamine to glutamate. PurL transfers the ammonia molecule to FGAR to form FGAM in an ATP-dependent manner. PurS interacts with PurQ and PurL and is thought to assist in the transfer of the ammonia molecule from PurQ to PurL. The polypeptide is Phosphoribosylformylglycinamidine synthase subunit PurL (Cereibacter sphaeroides (strain ATCC 17025 / ATH 2.4.3) (Rhodobacter sphaeroides)).